The sequence spans 410 residues: Metacaspase-1 (410 aa).

The segment at 1–94 (MFPGSGRQTY…RQSGAMNDVS (94 aa)) is disordered. 2 stretches are compositionally biased toward low complexity: residues 21–47 (APQYNYGPPQGPPQGYYNGPPQGYNGP) and 55–64 (NYNYGHYGPP). The span at 65–75 (QGQGQGYGQGG) shows a compositional bias: gly residues. The segment covering 80–94 (MYNNNRQSGAMNDVS) has biased composition (polar residues). Residues histidine 200 and cysteine 256 contribute to the active site.

It belongs to the peptidase C14B family.

Involved in cell death (apoptosis). The chain is Metacaspase-1 (MCA1) from Meyerozyma guilliermondii (strain ATCC 6260 / CBS 566 / DSM 6381 / JCM 1539 / NBRC 10279 / NRRL Y-324) (Yeast).